A 215-amino-acid chain; its full sequence is MSLFGLGRNQKTFRPKKSAPSGSKGAQLRKHIDATLGSGNLREAVRLPPGEDANEWLAVNTVDFFNQVNLLYGTLTEFCTPDNCPTMTAGPKYEYRWADGVQIKKPIEVSAPKYVEYLMDWIETQLDDETLFPQRLGAPFPQNFKDVVKTIFKRLFRVYAHIYHSHFQKIVSLKEEAHLNTCFKHFILFTHEFGLIDKKELAPLQELIESIISPY.

The tract at residues 1–27 is disordered; it reads MSLFGLGRNQKTFRPKKSAPSGSKGAQ. Residues C79, C84, H161, and H166 each contribute to the Zn(2+) site.

Belongs to the MOB1/phocein family. In terms of assembly, interacts with SIK1 at the plasma membrane and in the nucleus. As to expression, constitutively expressed. In 3- to 4-day-old seedlings, expression is high in the shoot apical meristem and along the vasculature in cotyledons, hypocotyls and roots. At the root tip, expression is detected in columella and lateral root cap cells as well as in the stem cell niche around the quiescent center (QC). The levels of expression decrease progressively in the meristematic zone from the root tip towards the base of the root, becoming stronger again in the elongation zone. In flowers, expression appears localized in ovules and pollen.

The protein resides in the nucleus. It localises to the cell membrane. The protein localises to the vacuole membrane. In terms of biological role, plays a key role in regulation of cell expansion and cell division. Required for proper plant development, the correct patterning of the root meristem and the control of root growth. Involved in both sporogenesis and gametogenesis. The polypeptide is MOB kinase activator-like 1A (Arabidopsis thaliana (Mouse-ear cress)).